The chain runs to 354 residues: tRNA N6-adenosine threonylcarbamoyltransferase (354 aa).

Fe cation is bound by residues histidine 116 and histidine 120. Residues 139–143 (LVSGG), aspartate 172, glycine 185, and asparagine 281 contribute to the substrate site. Position 309 (aspartate 309) interacts with Fe cation.

Belongs to the KAE1 / TsaD family. The cofactor is Fe(2+).

The protein resides in the cytoplasm. It catalyses the reaction L-threonylcarbamoyladenylate + adenosine(37) in tRNA = N(6)-L-threonylcarbamoyladenosine(37) in tRNA + AMP + H(+). Its function is as follows. Required for the formation of a threonylcarbamoyl group on adenosine at position 37 (t(6)A37) in tRNAs that read codons beginning with adenine. Is involved in the transfer of the threonylcarbamoyl moiety of threonylcarbamoyl-AMP (TC-AMP) to the N6 group of A37, together with TsaE and TsaB. TsaD likely plays a direct catalytic role in this reaction. The polypeptide is tRNA N6-adenosine threonylcarbamoyltransferase (Parasynechococcus marenigrum (strain WH8102)).